The primary structure comprises 584 residues: Cation channel sperm-associated protein 2 (584 aa).

The Cytoplasmic segment spans residues 1-106 (MAHERGHLQL…LWAGWVLDSS (106 aa)). The chain crosses the membrane as a helical span at residues 107 to 129 (IFSNFIISLIFLNTFVLMVEIEL). The Extracellular portion of the chain corresponds to 130–138 (MNSTNTSLW). The chain crosses the membrane as a helical span at residues 139 to 164 (PLKLALEVTDWFILLSFIVEILLMWL). Over 165–173 (ASFFLFWKN) the chain is Cytoplasmic. Residues 174 to 198 (AWSVFDFVVTMLSLLPEFVVLIGVS) traverse the membrane as a helical segment. Residues 199 to 201 (ADS) lie on the Extracellular side of the membrane. A helical transmembrane segment spans residues 202–220 (VWLQLLRVSRVLRSLKLFA). Topologically, residues 221–237 (RFPQIKVILLALVRALK) are cytoplasmic. The chain crosses the membrane as a helical span at residues 238 to 260 (SMTFLLMLLLIFFYVFAVAGVYF). Over 261-279 (FKEYSRSTIENLEYNMFFS) the chain is Extracellular. The segment at residues 280–292 (DLLNSLVTVFILF) is an intramembrane region (helical; Pore-forming). The Extracellular segment spans residues 293-312 (TLDHWYAVLQDVWKVPEASR). Residues 313–339 (VFSSIYVILWLLLGSIIFRNIIVAMMV) form a helical membrane-spanning segment. Topologically, residues 340 to 584 (TNFQNIRNEL…VQALMNFEDK (245 aa)) are cytoplasmic. Over residues 376–386 (SESLRGTSQGK) the composition is skewed to polar residues. Disordered stretches follow at residues 376–460 (SESL…KGYT) and 480–510 (AGKA…HDEA). 2 stretches are compositionally biased toward acidic residues: residues 390 to 418 (DITE…EEKS) and 426 to 443 (EKND…EEKS). Composition is skewed to basic and acidic residues over residues 444 to 460 (DVEK…KGYT) and 483 to 496 (AENE…KEKA).

This sequence belongs to the cation channel sperm-associated (TC 1.A.1.19) family. Component of the CatSper complex or CatSpermasome composed of the core pore-forming members CATSPER1, CATSPER2, CATSPER3 and CATSPER4 as well as auxiliary members CATSPERB, CATSPERG, CATSPERD, CATSPERE, CATSPERZ, C2CD6/CATSPERT, SLCO6C1, TMEM249, TMEM262 and EFCAB9. HSPA1 may be an additional auxiliary complex member. The core complex members CATSPER1, CATSPER2, CATSPER3 and CATSPER4 form a heterotetrameric channel. The auxiliary CATSPERB, CATSPERG, CATSPERD and CATSPERE subunits form a pavilion-like structure over the pore which stabilizes the complex through interactions with CATSPER4, CATSPER3, CATSPER1 and CATSPER2 respectively. SLCO6C1 interacts with CATSPERE and TMEM262/CATSPERH interacts with CATSPERB, further stabilizing the complex. C2CD6/CATSPERT interacts at least with CATSPERD and is required for targeting the CatSper complex in the flagellar membrane. Interacts with Ca(v)3.3/CACNA1I, leading to suppression of T-type calcium channel activity.

It localises to the cell projection. The protein resides in the cilium. The protein localises to the flagellum membrane. It catalyses the reaction Ca(2+)(in) = Ca(2+)(out). Activated by intracellular alkalinization. Pore-forming subunit of the CatSper complex, a sperm-specific voltage-gated calcium channel that plays a central role in sperm cell hyperactivation. Controls calcium entry to mediate the hyperactivated motility, a step needed for sperm motility which is essential late in the preparation of sperm for fertilization. This Rattus norvegicus (Rat) protein is Cation channel sperm-associated protein 2 (Catsper2).